Here is a 123-residue protein sequence, read N- to C-terminus: Small ribosomal subunit protein uS12cz/uS12cy (123 aa).

The protein belongs to the universal ribosomal protein uS12 family. In terms of assembly, part of the 30S ribosomal subunit.

The protein localises to the plastid. Its subcellular location is the chloroplast. Functionally, with S4 and S5 plays an important role in translational accuracy. Located at the interface of the 30S and 50S subunits. The sequence is that of Small ribosomal subunit protein uS12cz/uS12cy (rps12-A) from Gossypium hirsutum (Upland cotton).